The primary structure comprises 310 residues: MTNFEKIIAQNKLKTNAVLATYCVIFAFIGLLVDVIRINANDLGTALFKLMTFQIFPTITIIMFLVAFVIIVVCIQNFSSIMLSGDEYKLIDKSKVLSSKENQIHRLLLELLEEAKLHFEPKLYIIKAPYMNAFASGWNESNSLIALTSALIERLDRDELKAVIAHELSHIRHNDIRLTMCVGILSNIMLLVANFSVYFFMGNRKNSGANLARMILLVLQIILPFLTLLLQMYLSRTREYMADSGAAFLMHDNKPMIRALQKISNDYANNDYKGVDQNSTRSAAYLFSAEMFSTHPSIKNRIQSLSRRVI.

The next 2 helical transmembrane spans lie at 16–36 and 55–75; these read NAVL…VDVI and IFPT…VVCI. His-166 serves as a coordination point for Zn(2+). Glu-167 is an active-site residue. His-170 is a binding site for Zn(2+). Transmembrane regions (helical) follow at residues 182 to 202 and 214 to 234; these read VGIL…FFMG and MILL…QMYL. Glu-239 is a binding site for Zn(2+).

This sequence belongs to the peptidase M48B family. It depends on Zn(2+) as a cofactor.

The protein resides in the cell inner membrane. In Helicobacter pylori (strain Shi470), this protein is Protease HtpX homolog.